Consider the following 220-residue polypeptide: Probable nicotinate-nucleotide adenylyltransferase (220 aa).

The protein belongs to the NadD family.

The catalysed reaction is nicotinate beta-D-ribonucleotide + ATP + H(+) = deamido-NAD(+) + diphosphate. It participates in cofactor biosynthesis; NAD(+) biosynthesis; deamido-NAD(+) from nicotinate D-ribonucleotide: step 1/1. Its function is as follows. Catalyzes the reversible adenylation of nicotinate mononucleotide (NaMN) to nicotinic acid adenine dinucleotide (NaAD). The polypeptide is Probable nicotinate-nucleotide adenylyltransferase (Laribacter hongkongensis (strain HLHK9)).